We begin with the raw amino-acid sequence, 158 residues long: MSSAIERKSLDPSEEPVDEVLQIPPSLLTCGGCQQNIGDRYFLKAIDQYWHEDCLSCDLCGCRLGEVGRRLYYKLGRKLCRRDYLRLFGQDGLCASCDKRIRAYEMTMRVKDKVYHLECFKCAACQKHFCVGDRYLLINSDIVCEQDIYEWTKINGMI.

2 LIM zinc-binding domains span residues 30-89 (CGGC…RLFG) and 94-153 (CASC…EWTK).

As to quaternary structure, interacts via its LIM domains with ELF2 and LDB1. Also interacts with basic helix-loop-helix protein TAL1/SCL and can assemble in a complex with LMO2 and TAL1/SCL. Interacts with BEX2 and KDM5A.

The protein localises to the nucleus. Its function is as follows. Acts with TAL1/SCL to regulate red blood cell development. Also acts with LDB1 to maintain erythroid precursors in an immature state. This chain is Rhombotin-2 (LMO2), found in Homo sapiens (Human).